The following is a 372-amino-acid chain: O-glycoside alpha-1,2-mannosyltransferase homolog 2 (372 aa).

Over methionine 1 to leucine 6 the chain is Cytoplasmic. Residues leucine 7–isoleucine 27 form a helical; Signal-anchor for type II membrane protein membrane-spanning segment. Residues proline 28–leucine 372 lie on the Lumenal side of the membrane. The active-site Nucleophile is the glutamate 271.

It belongs to the glycosyltransferase 15 family.

It localises to the endoplasmic reticulum membrane. In terms of biological role, probable mannosyltransferase involved in O-glycosylation of cell wall and secreted proteins. The sequence is that of O-glycoside alpha-1,2-mannosyltransferase homolog 2 (omh2) from Schizosaccharomyces pombe (strain 972 / ATCC 24843) (Fission yeast).